Here is a 104-residue protein sequence, read N- to C-terminus: Large ribosomal subunit protein uL24 (104 aa).

Belongs to the universal ribosomal protein uL24 family. As to quaternary structure, part of the 50S ribosomal subunit.

One of two assembly initiator proteins, it binds directly to the 5'-end of the 23S rRNA, where it nucleates assembly of the 50S subunit. In terms of biological role, one of the proteins that surrounds the polypeptide exit tunnel on the outside of the subunit. The protein is Large ribosomal subunit protein uL24 of Pseudoalteromonas atlantica (strain T6c / ATCC BAA-1087).